The following is a 193-amino-acid chain: MLGCRFVAGVQDRKSFPDFGVPEVAFAGRSNVGKSSLINAITNNKKNAKTSSNPGSTRQINFYLNKGIVALVDLPGYGYSKASKEATRGYLDVMEHYLMSREALQRLVLLIDSRIGLKEIDRDFLCWLEEHGIYYSIVLTKADKLSEQALGSMVSFVQNQAQGGNFLLQPIMWVSSKSGRGIRELAHEISRCI.

The 174-residue stretch at 20–193 (GVPEVAFAGR…ELAHEISRCI (174 aa)) folds into the EngB-type G domain. GTP is bound by residues 28-35 (GRSNVGKS), 55-59 (GSTRQ), 73-76 (DLPG), 140-143 (TKAD), and 171-176 (IMWVSS). The Mg(2+) site is built by Ser35 and Thr57.

The protein belongs to the TRAFAC class TrmE-Era-EngA-EngB-Septin-like GTPase superfamily. EngB GTPase family. Mg(2+) is required as a cofactor.

Necessary for normal cell division and for the maintenance of normal septation. This is Probable GTP-binding protein EngB from Anaplasma phagocytophilum (strain HZ).